Consider the following 221-residue polypeptide: Deoxyribose-phosphate aldolase (221 aa).

The active-site Proton donor/acceptor is D89. Catalysis depends on K151, which acts as the Schiff-base intermediate with acetaldehyde. K180 functions as the Proton donor/acceptor in the catalytic mechanism.

The protein belongs to the DeoC/FbaB aldolase family. DeoC type 1 subfamily.

It is found in the cytoplasm. It carries out the reaction 2-deoxy-D-ribose 5-phosphate = D-glyceraldehyde 3-phosphate + acetaldehyde. It participates in carbohydrate degradation; 2-deoxy-D-ribose 1-phosphate degradation; D-glyceraldehyde 3-phosphate and acetaldehyde from 2-deoxy-alpha-D-ribose 1-phosphate: step 2/2. In terms of biological role, catalyzes a reversible aldol reaction between acetaldehyde and D-glyceraldehyde 3-phosphate to generate 2-deoxy-D-ribose 5-phosphate. This Brevibacillus brevis (strain 47 / JCM 6285 / NBRC 100599) protein is Deoxyribose-phosphate aldolase.